The primary structure comprises 345 residues: Phosphoribosylformylglycinamidine cyclo-ligase (345 aa).

Belongs to the AIR synthase family.

The protein resides in the cytoplasm. The enzyme catalyses 2-formamido-N(1)-(5-O-phospho-beta-D-ribosyl)acetamidine + ATP = 5-amino-1-(5-phospho-beta-D-ribosyl)imidazole + ADP + phosphate + H(+). It functions in the pathway purine metabolism; IMP biosynthesis via de novo pathway; 5-amino-1-(5-phospho-D-ribosyl)imidazole from N(2)-formyl-N(1)-(5-phospho-D-ribosyl)glycinamide: step 2/2. The chain is Phosphoribosylformylglycinamidine cyclo-ligase from Shigella dysenteriae serotype 1 (strain Sd197).